Reading from the N-terminus, the 536-residue chain is Metal transporter Nramp2 (536 aa).

Residues 1-37 (MSSPSGGEDSKDDEKDEESNRLLPLSSSSQSQSLQSE) are disordered. Low complexity predominate over residues 22-36 (LLPLSSSSQSQSLQS). N-linked (GlcNAc...) asparagine glycosylation is present at asparagine 38. A run of 12 helical transmembrane segments spans residues 76-96 (LWLF…PGNL), 104-124 (AIAG…GLLI), 161-181 (VALI…IQIL), 185-205 (FLPL…FLFL), 213-233 (LEGV…WMCG), 259-279 (AVGV…SALV), 305-325 (VALF…AKGF), 347-367 (YGGG…AAGQ), 400-420 (SFAI…EASL), 435-455 (IPFA…MGVF), 465-485 (AWTI…DFFI), and 492-512 (LFGF…IYLV).

Belongs to the NRAMP (TC 2.A.55) family.

It is found in the membrane. Functionally, probable divalent metal transporter. This is Metal transporter Nramp2 from Populus trichocarpa (Western balsam poplar).